A 701-amino-acid chain; its full sequence is Polyribonucleotide nucleotidyltransferase (701 aa).

The Mg(2+) site is built by Asp487 and Asp493. In terms of domain architecture, KH spans 554-613 (PTMIAMKIDTDKIRDVIGKGGATIRAICEETKASIDIEDDGSIKIFGETKEAAEAARQRV). Positions 623–691 (GKIYVGKVER…NRGRIKLSIK (69 aa)) constitute an S1 motif domain.

It belongs to the polyribonucleotide nucleotidyltransferase family. In terms of assembly, component of the RNA degradosome, which is a multiprotein complex involved in RNA processing and mRNA degradation. Mg(2+) serves as cofactor.

Its subcellular location is the cytoplasm. It carries out the reaction RNA(n+1) + phosphate = RNA(n) + a ribonucleoside 5'-diphosphate. Involved in mRNA degradation. Catalyzes the phosphorolysis of single-stranded polyribonucleotides processively in the 3'- to 5'-direction. This Pseudomonas fluorescens (strain SBW25) protein is Polyribonucleotide nucleotidyltransferase.